Here is a 239-residue protein sequence, read N- to C-terminus: Orotidine 5'-phosphate decarboxylase (239 aa).

Residues D10, K32, 59–68 (DLKLHDIPNT), T122, R184, Q193, G213, and R214 contribute to the substrate site. K61 functions as the Proton donor in the catalytic mechanism.

This sequence belongs to the OMP decarboxylase family. Type 1 subfamily. As to quaternary structure, homodimer.

It carries out the reaction orotidine 5'-phosphate + H(+) = UMP + CO2. It participates in pyrimidine metabolism; UMP biosynthesis via de novo pathway; UMP from orotate: step 2/2. In terms of biological role, catalyzes the decarboxylation of orotidine 5'-monophosphate (OMP) to uridine 5'-monophosphate (UMP). This chain is Orotidine 5'-phosphate decarboxylase, found in Geobacillus sp. (strain WCH70).